We begin with the raw amino-acid sequence, 290 residues long: LLDPRVKVLAVSDPFIDLQYMVYMFKYDSVHGRFKGTVEIKDGKLVIDGHPITVFQERDPANIQWGSVGADYVVESSGVFTTVDKASAHLKGGAKKVIISAPSADAPMFVVGVNLDAYDSKYTVISNASCTTNCLAPLAKVINDKFGIVEGLMSTIHATTATQKTVDGPSNKDWRGGRAVNGNIIPSSTGAAKAVGKVIPALNGKLTGLAFRVPTNDVSVVDLVVRLEKEATYDEIKLAVKEAADGPLKGIIEYTDDLVVSTDFIGSTASSIFDAGAGIQLNKNFAKLIS.

NAD(+)-binding residues include D13 and R58. D-glyceraldehyde 3-phosphate contacts are provided by residues 129–131, T160, 189–190, and R212; these read SCT and TG. Residue C130 is the Nucleophile of the active site.

This sequence belongs to the glyceraldehyde-3-phosphate dehydrogenase family. In terms of assembly, homotetramer.

The protein localises to the cytoplasm. It carries out the reaction D-glyceraldehyde 3-phosphate + phosphate + NAD(+) = (2R)-3-phospho-glyceroyl phosphate + NADH + H(+). It functions in the pathway carbohydrate degradation; glycolysis; pyruvate from D-glyceraldehyde 3-phosphate: step 1/5. The chain is Glyceraldehyde-3-phosphate dehydrogenase (GPD) from Lactarius deterrimus (False saffron milkcap).